The sequence spans 837 residues: Protein ROD1 (837 aa).

S138 and S141 each carry phosphoserine. K401 is covalently cross-linked (Glycyl lysine isopeptide (Lys-Gly) (interchain with G-Cter in ubiquitin)). S436 carries the phosphoserine modification. The PY-motif motif lies at 487–490 (PPNY). S536 carries the post-translational modification Phosphoserine. The short motif at 656 to 659 (PPAY) is the PY-motif element. Disordered stretches follow at residues 675–726 (ERPQ…SVSL) and 763–837 (SFTS…RDRS). The span at 685–703 (TSSLLPLPGSSKSSNNLKR) shows a compositional bias: low complexity. Positions 716 to 726 (PRNNSGSSVSL) are enriched in polar residues. Residues S720 and S725 each carry the phosphoserine modification. Low complexity predominate over residues 763-773 (SFTSNSSSKNN). A compositionally biased stretch (basic and acidic residues) spans 774-792 (SHFDKTDSTSDANKPREEE). Residues 805 to 815 (SSSVRSNNSNS) show a composition bias toward low complexity.

The protein belongs to the arrestin family. In terms of assembly, interacts with RSP5 via its 2 PY-motifs.

Its subcellular location is the membrane. In terms of biological role, mediates resistance to o-dinitrobenzene, calcium and zinc. This Saccharomyces cerevisiae (strain ATCC 204508 / S288c) (Baker's yeast) protein is Protein ROD1 (ROD1).